A 179-amino-acid polypeptide reads, in one-letter code: M-phase-specific PLK1-interacting protein (179 aa).

A disordered region spans residues 1–135 (MQRQNFRPPT…RVREKRMSNE (135 aa)). Arg-37 carries the post-translational modification Asymmetric dimethylarginine. Residues Ser-40 and Ser-47 each carry the phosphoserine modification. At Thr-51 the chain carries Phosphothreonine. Arg-57 bears the Omega-N-methylarginine mark. An asymmetric dimethylarginine mark is found at Arg-59 and Arg-68. Residues 60–71 (PYGSSHSPRHGG) show a composition bias toward low complexity. Residue Ser-72 is modified to Phosphoserine. Residue Arg-77 is modified to Asymmetric dimethylarginine. Residues 79 to 109 (GSPSPGGYPGSYSRSPAGSQQQFGYSPGQQQ) show a composition bias toward low complexity. Phosphoserine occurs at positions 80, 82, 93, 104, and 115. The span at 110-122 (THPQGSPRTSTPF) shows a compositional bias: polar residues. Arg-117 bears the Omega-N-methylarginine mark. A Phosphothreonine modification is found at Thr-120. 2 positions are modified to phosphoserine: Ser-124 and Ser-133.

As to quaternary structure, interacts with PLK1; phosphorylation-dependent. Phosphorylated during mitosis in the cell cycle probably by CDK1. As to expression, expressed at highest levels in liver and kidney; intermediate expression in skeletal muscle, pancreas, heart and placenta; low expression in brain and lung. Expressed in epidermis and hair follicles.

It is found in the nucleus. Its subcellular location is the cytoplasm. The protein resides in the cytoskeleton. It localises to the microtubule organizing center. The protein localises to the centrosome. May play a role in maintenance of cell cycle integrity by regulating mitosis or cytokinesis. The protein is M-phase-specific PLK1-interacting protein (MPLKIP) of Homo sapiens (Human).